Consider the following 617-residue polypeptide: Glutamyl-tRNA(Gln) amidotransferase subunit B, mitochondrial (617 aa).

Residues 1-56 (MPRIPTSVLGKYLLSGQISRQGCVGARQITRHSALPSAAVSVANSARLLHVSSETV) constitute a mitochondrion transit peptide. Residues 53–90 (SETVPPPPAQPVPLRKQLKDEAKKAKKQGKKKSKGDSQ) form a disordered region. Over residues 76–85 (KAKKQGKKKS) the composition is skewed to basic residues.

This sequence belongs to the GatB/GatE family. GatB subfamily. Subunit of the heterotrimeric GatCAB amidotransferase (AdT) complex, composed of A, B and C subunits.

Its subcellular location is the mitochondrion. The enzyme catalyses L-glutamyl-tRNA(Gln) + L-glutamine + ATP + H2O = L-glutaminyl-tRNA(Gln) + L-glutamate + ADP + phosphate + H(+). Functionally, allows the formation of correctly charged Gln-tRNA(Gln) through the transamidation of misacylated Glu-tRNA(Gln) in the mitochondria. The reaction takes place in the presence of glutamine and ATP through an activated gamma-phospho-Glu-tRNA(Gln). This chain is Glutamyl-tRNA(Gln) amidotransferase subunit B, mitochondrial, found in Fusarium vanettenii (strain ATCC MYA-4622 / CBS 123669 / FGSC 9596 / NRRL 45880 / 77-13-4) (Fusarium solani subsp. pisi).